Consider the following 263-residue polypeptide: Tryptophan synthase alpha chain (263 aa).

Active-site proton acceptor residues include glutamate 49 and aspartate 60.

Belongs to the TrpA family. In terms of assembly, tetramer of two alpha and two beta chains.

It catalyses the reaction (1S,2R)-1-C-(indol-3-yl)glycerol 3-phosphate + L-serine = D-glyceraldehyde 3-phosphate + L-tryptophan + H2O. Its pathway is amino-acid biosynthesis; L-tryptophan biosynthesis; L-tryptophan from chorismate: step 5/5. Functionally, the alpha subunit is responsible for the aldol cleavage of indoleglycerol phosphate to indole and glyceraldehyde 3-phosphate. This Cereibacter sphaeroides (strain ATCC 17025 / ATH 2.4.3) (Rhodobacter sphaeroides) protein is Tryptophan synthase alpha chain.